Consider the following 278-residue polypeptide: Hydroxyethylthiazole kinase (278 aa).

Met-49 provides a ligand contact to substrate. ATP is bound by residues Asn-125 and Ser-171. Gly-198 is a binding site for substrate.

Belongs to the Thz kinase family. The cofactor is Mg(2+).

The enzyme catalyses 5-(2-hydroxyethyl)-4-methylthiazole + ATP = 4-methyl-5-(2-phosphooxyethyl)-thiazole + ADP + H(+). Its pathway is cofactor biosynthesis; thiamine diphosphate biosynthesis; 4-methyl-5-(2-phosphoethyl)-thiazole from 5-(2-hydroxyethyl)-4-methylthiazole: step 1/1. Functionally, catalyzes the phosphorylation of the hydroxyl group of 4-methyl-5-beta-hydroxyethylthiazole (THZ). The chain is Hydroxyethylthiazole kinase from Natronomonas pharaonis (strain ATCC 35678 / DSM 2160 / CIP 103997 / JCM 8858 / NBRC 14720 / NCIMB 2260 / Gabara) (Halobacterium pharaonis).